Reading from the N-terminus, the 188-residue chain is Putative manganese efflux pump MntP (188 aa).

The next 6 membrane-spanning stretches (helical) occupy residues 8–28 (CLGL…GFVI), 39–59 (IALF…LTGL), 68–88 (IDHW…IYEA), 106–126 (LLAL…GLSL), 131–151 (ILLP…IGVF), and 164–184 (IEII…IEDL).

The protein belongs to the MntP (TC 9.B.29) family.

It is found in the cell inner membrane. In terms of biological role, probably functions as a manganese efflux pump. The protein is Putative manganese efflux pump MntP of Crocosphaera subtropica (strain ATCC 51142 / BH68) (Cyanothece sp. (strain ATCC 51142)).